Here is a 579-residue protein sequence, read N- to C-terminus: Glutamine--tRNA ligase (579 aa).

A 'HIGH' region motif is present at residues 41–51 (PEPNGYLHIGH). Residues 42–44 (EPN) and 48–54 (HIGHAKA) contribute to the ATP site. L-glutamine contacts are provided by Asp74 and Tyr218. ATP-binding positions include Thr237, 285 to 286 (RL), and 293 to 295 (MSK). Positions 292-296 (VMSKR) match the 'KMSKS' region motif.

Belongs to the class-I aminoacyl-tRNA synthetase family. In terms of assembly, monomer.

It is found in the cytoplasm. It catalyses the reaction tRNA(Gln) + L-glutamine + ATP = L-glutaminyl-tRNA(Gln) + AMP + diphosphate. The polypeptide is Glutamine--tRNA ligase (Xanthomonas oryzae pv. oryzae (strain MAFF 311018)).